The following is a 433-amino-acid chain: Glutamate-1-semialdehyde 2,1-aminomutase (433 aa).

The residue at position 273 (K273) is an N6-(pyridoxal phosphate)lysine.

The protein belongs to the class-III pyridoxal-phosphate-dependent aminotransferase family. HemL subfamily. In terms of assembly, homodimer. Pyridoxal 5'-phosphate serves as cofactor.

The protein localises to the cytoplasm. The enzyme catalyses (S)-4-amino-5-oxopentanoate = 5-aminolevulinate. The protein operates within porphyrin-containing compound metabolism; protoporphyrin-IX biosynthesis; 5-aminolevulinate from L-glutamyl-tRNA(Glu): step 2/2. It participates in porphyrin-containing compound metabolism; chlorophyll biosynthesis. The polypeptide is Glutamate-1-semialdehyde 2,1-aminomutase (Gloeothece citriformis (strain PCC 7424) (Cyanothece sp. (strain PCC 7424))).